Consider the following 158-residue polypeptide: Transcription elongation factor GreA (158 aa).

Residues 47–74 (AEYHAAKEEQSHNEGRIAELEDKLARAD) are a coiled coil.

This sequence belongs to the GreA/GreB family.

Necessary for efficient RNA polymerase transcription elongation past template-encoded arresting sites. The arresting sites in DNA have the property of trapping a certain fraction of elongating RNA polymerases that pass through, resulting in locked ternary complexes. Cleavage of the nascent transcript by cleavage factors such as GreA or GreB allows the resumption of elongation from the new 3'terminus. GreA releases sequences of 2 to 3 nucleotides. The protein is Transcription elongation factor GreA of Nitrobacter winogradskyi (strain ATCC 25391 / DSM 10237 / CIP 104748 / NCIMB 11846 / Nb-255).